Here is a 171-residue protein sequence, read N- to C-terminus: MVILGIDPGSRITGFGIIKIHDNKLYYVASGCIRITETGTARRLKQIADGITEVVNTYAPTESAIEQIFMFQNPGAALKLGQARGVAMCTLAINNLEVSEYSAKQIKQAVVGTGGAAKSQVQHMVQSILGLSKKPPEDAADALAIAICHYHSSKSLARIAGASRVSQKRIR.

Catalysis depends on residues Asp-7, Glu-66, and Asp-138. Residues Asp-7, Glu-66, and Asp-138 each coordinate Mg(2+).

It belongs to the RuvC family. In terms of assembly, homodimer which binds Holliday junction (HJ) DNA. The HJ becomes 2-fold symmetrical on binding to RuvC with unstacked arms; it has a different conformation from HJ DNA in complex with RuvA. In the full resolvosome a probable DNA-RuvA(4)-RuvB(12)-RuvC(2) complex forms which resolves the HJ. The cofactor is Mg(2+).

The protein localises to the cytoplasm. It catalyses the reaction Endonucleolytic cleavage at a junction such as a reciprocal single-stranded crossover between two homologous DNA duplexes (Holliday junction).. Functionally, the RuvA-RuvB-RuvC complex processes Holliday junction (HJ) DNA during genetic recombination and DNA repair. Endonuclease that resolves HJ intermediates. Cleaves cruciform DNA by making single-stranded nicks across the HJ at symmetrical positions within the homologous arms, yielding a 5'-phosphate and a 3'-hydroxyl group; requires a central core of homology in the junction. The consensus cleavage sequence is 5'-(A/T)TT(C/G)-3'. Cleavage occurs on the 3'-side of the TT dinucleotide at the point of strand exchange. HJ branch migration catalyzed by RuvA-RuvB allows RuvC to scan DNA until it finds its consensus sequence, where it cleaves and resolves the cruciform DNA. The chain is Crossover junction endodeoxyribonuclease RuvC from Francisella philomiragia subsp. philomiragia (strain ATCC 25017 / CCUG 19701 / FSC 153 / O#319-036).